The sequence spans 363 residues: 3-dehydroquinate synthase (363 aa).

NAD(+)-binding positions include 74 to 79 (DGEQYK), 108 to 112 (GVIGD), 132 to 133 (TT), K145, K154, and 172 to 175 (CLKT). Zn(2+)-binding residues include E187, H250, and H267.

It belongs to the sugar phosphate cyclases superfamily. Dehydroquinate synthase family. Requires NAD(+) as cofactor. The cofactor is Co(2+). Zn(2+) is required as a cofactor.

It is found in the cytoplasm. The enzyme catalyses 7-phospho-2-dehydro-3-deoxy-D-arabino-heptonate = 3-dehydroquinate + phosphate. The protein operates within metabolic intermediate biosynthesis; chorismate biosynthesis; chorismate from D-erythrose 4-phosphate and phosphoenolpyruvate: step 2/7. Catalyzes the conversion of 3-deoxy-D-arabino-heptulosonate 7-phosphate (DAHP) to dehydroquinate (DHQ). The sequence is that of 3-dehydroquinate synthase from Buchnera aphidicola subsp. Acyrthosiphon pisum (strain APS) (Acyrthosiphon pisum symbiotic bacterium).